The primary structure comprises 296 residues: Urease accessory protein UreD (296 aa).

The protein belongs to the UreD family. As to quaternary structure, ureD, UreF and UreG form a complex that acts as a GTP-hydrolysis-dependent molecular chaperone, activating the urease apoprotein by helping to assemble the nickel containing metallocenter of UreC. The UreE protein probably delivers the nickel.

It is found in the cytoplasm. Its function is as follows. Required for maturation of urease via the functional incorporation of the urease nickel metallocenter. The protein is Urease accessory protein UreD of Methylibium petroleiphilum (strain ATCC BAA-1232 / LMG 22953 / PM1).